The sequence spans 102 residues: Defensin-like protein 285 (102 aa).

A signal peptide spans 1-28; the sequence is MTNLYFKTAFLLSLLLLSFSYQSKLIEA. Disulfide bonds link C39/C100, C64/C83, C70/C88, and C75/C90.

This sequence belongs to the DEFL family.

Its subcellular location is the secreted. The protein is Defensin-like protein 285 of Arabidopsis thaliana (Mouse-ear cress).